Here is a 372-residue protein sequence, read N- to C-terminus: Protein-glutamate methylesterase/protein-glutamine glutaminase (372 aa).

Residues 5–123 (RVLIVDDSAL…SANLTTVSET (119 aa)) enclose the Response regulatory domain. D56 is modified (4-aspartylphosphate). Residues 140-151 (GTRSTDTTNSFS) are compositionally biased toward polar residues. The segment at 140-177 (GTRSTDTTNSFSEPFKSTIPKPMTAAEPQKEEKPTPQR) is disordered. Over residues 167–177 (PQKEEKPTPQR) the composition is skewed to basic and acidic residues. A CheB-type methylesterase domain is found at 178–364 (EHGNIQIIAI…VSLDNMAAAI (187 aa)). Catalysis depends on residues S190, H217, and D313.

Belongs to the CheB family. Phosphorylated by CheA. Phosphorylation of the N-terminal regulatory domain activates the methylesterase activity.

The protein resides in the cytoplasm. It catalyses the reaction [protein]-L-glutamate 5-O-methyl ester + H2O = L-glutamyl-[protein] + methanol + H(+). The enzyme catalyses L-glutaminyl-[protein] + H2O = L-glutamyl-[protein] + NH4(+). In terms of biological role, involved in chemotaxis. Part of a chemotaxis signal transduction system that modulates chemotaxis in response to various stimuli. Catalyzes the demethylation of specific methylglutamate residues introduced into the chemoreceptors (methyl-accepting chemotaxis proteins or MCP) by CheR. Also mediates the irreversible deamidation of specific glutamine residues to glutamic acid. The protein is Protein-glutamate methylesterase/protein-glutamine glutaminase of Treponema denticola (strain ATCC 35405 / DSM 14222 / CIP 103919 / JCM 8153 / KCTC 15104).